Reading from the N-terminus, the 809-residue chain is Penicillin-binding protein 1A (809 aa).

Residues 1–34 lie on the Cytoplasmic side of the membrane; that stretch reads MSDNTKTNSRNKSVKRTKKVKKKKKFGFFKKLFT. Residues 35-55 traverse the membrane as a helical; Signal-anchor for type II membrane protein segment; the sequence is ILFCLFILLSVAASGVIFAIV. At 56–809 the chain is on the extracellular side; the sequence is KTSPNLDING…PNNNTTNTNK (754 aa). Residues 74 to 251 are transglycosylase; sequence SQLYDDNNNP…PSAYYPFSQN (178 aa). E113 functions as the Proton donor; for transglycosylase activity in the catalytic mechanism. Residues 381–664 form a transpeptidase region; the sequence is AAATLFDYHT…VAEIWGEIMK (284 aa). S422 functions as the Acyl-ester intermediate; for transpeptidase activity in the catalytic mechanism. Residues 694–809 are disordered; the sequence is SPSNLSGDDS…PNNNTTNTNK (116 aa).

This sequence in the N-terminal section; belongs to the glycosyltransferase 51 family. In the C-terminal section; belongs to the transpeptidase family.

Its subcellular location is the cell membrane. It carries out the reaction [GlcNAc-(1-&gt;4)-Mur2Ac(oyl-L-Ala-gamma-D-Glu-L-Lys-D-Ala-D-Ala)](n)-di-trans,octa-cis-undecaprenyl diphosphate + beta-D-GlcNAc-(1-&gt;4)-Mur2Ac(oyl-L-Ala-gamma-D-Glu-L-Lys-D-Ala-D-Ala)-di-trans,octa-cis-undecaprenyl diphosphate = [GlcNAc-(1-&gt;4)-Mur2Ac(oyl-L-Ala-gamma-D-Glu-L-Lys-D-Ala-D-Ala)](n+1)-di-trans,octa-cis-undecaprenyl diphosphate + di-trans,octa-cis-undecaprenyl diphosphate + H(+). It catalyses the reaction Preferential cleavage: (Ac)2-L-Lys-D-Ala-|-D-Ala. Also transpeptidation of peptidyl-alanyl moieties that are N-acyl substituents of D-alanine.. The protein operates within cell wall biogenesis; peptidoglycan biosynthesis. Functionally, cell wall formation. Synthesis of cross-linked peptidoglycan from the lipid intermediates. The enzyme has a penicillin-insensitive transglycosylase N-terminal domain (formation of linear glycan strands) and a penicillin-sensitive transpeptidase C-terminal domain (cross-linking of the peptide subunits). In Clostridium acetobutylicum (strain ATCC 824 / DSM 792 / JCM 1419 / IAM 19013 / LMG 5710 / NBRC 13948 / NRRL B-527 / VKM B-1787 / 2291 / W), this protein is Penicillin-binding protein 1A (pbpA).